We begin with the raw amino-acid sequence, 142 residues long: Nucleoside diphosphate kinase (142 aa).

ATP-binding residues include Lys9, Phe57, Arg85, Thr91, Arg102, and Asn112. The active-site Pros-phosphohistidine intermediate is the His115.

This sequence belongs to the NDK family. As to quaternary structure, homotetramer. The cofactor is Mg(2+).

The protein localises to the cytoplasm. The catalysed reaction is a 2'-deoxyribonucleoside 5'-diphosphate + ATP = a 2'-deoxyribonucleoside 5'-triphosphate + ADP. It carries out the reaction a ribonucleoside 5'-diphosphate + ATP = a ribonucleoside 5'-triphosphate + ADP. In terms of biological role, major role in the synthesis of nucleoside triphosphates other than ATP. The ATP gamma phosphate is transferred to the NDP beta phosphate via a ping-pong mechanism, using a phosphorylated active-site intermediate. This chain is Nucleoside diphosphate kinase, found in Dehalococcoides mccartyi (strain ATCC BAA-2100 / JCM 16839 / KCTC 5957 / BAV1).